Here is a 188-residue protein sequence, read N- to C-terminus: NADH-quinone oxidoreductase subunit B 1 (188 aa).

Residues cysteine 32, cysteine 33, cysteine 98, and cysteine 128 each coordinate [4Fe-4S] cluster. The disordered stretch occupies residues 153–188 (VGGVSRPDALASPADALPPRAADSLTAPPVRPPDPS). Over residues 157 to 177 (SRPDALASPADALPPRAADSL) the composition is skewed to low complexity.

This sequence belongs to the complex I 20 kDa subunit family. NDH-1 is composed of 14 different subunits. Subunits NuoB, C, D, E, F, and G constitute the peripheral sector of the complex. [4Fe-4S] cluster is required as a cofactor.

Its subcellular location is the cell membrane. It carries out the reaction a quinone + NADH + 5 H(+)(in) = a quinol + NAD(+) + 4 H(+)(out). Its function is as follows. NDH-1 shuttles electrons from NADH, via FMN and iron-sulfur (Fe-S) centers, to quinones in the respiratory chain. The immediate electron acceptor for the enzyme in this species is believed to be a menaquinone. Couples the redox reaction to proton translocation (for every two electrons transferred, four hydrogen ions are translocated across the cytoplasmic membrane), and thus conserves the redox energy in a proton gradient. The protein is NADH-quinone oxidoreductase subunit B 1 (nuoB1) of Salinispora tropica (strain ATCC BAA-916 / DSM 44818 / JCM 13857 / NBRC 105044 / CNB-440).